The following is a 509-amino-acid chain: ATP synthase subunit alpha (509 aa).

ATP is bound at residue 169–176 (GDRQTGKT).

The protein belongs to the ATPase alpha/beta chains family. As to quaternary structure, F-type ATPases have 2 components, CF(1) - the catalytic core - and CF(0) - the membrane proton channel. CF(1) has five subunits: alpha(3), beta(3), gamma(1), delta(1), epsilon(1). CF(0) has three main subunits: a(1), b(2) and c(9-12). The alpha and beta chains form an alternating ring which encloses part of the gamma chain. CF(1) is attached to CF(0) by a central stalk formed by the gamma and epsilon chains, while a peripheral stalk is formed by the delta and b chains.

It is found in the cell inner membrane. It catalyses the reaction ATP + H2O + 4 H(+)(in) = ADP + phosphate + 5 H(+)(out). Functionally, produces ATP from ADP in the presence of a proton gradient across the membrane. The alpha chain is a regulatory subunit. This chain is ATP synthase subunit alpha, found in Methylorubrum populi (strain ATCC BAA-705 / NCIMB 13946 / BJ001) (Methylobacterium populi).